The chain runs to 292 residues: Ribosomal protein L11 methyltransferase (292 aa).

S-adenosyl-L-methionine-binding residues include threonine 145, glycine 166, aspartate 188, and asparagine 229.

It belongs to the methyltransferase superfamily. PrmA family.

It is found in the cytoplasm. It carries out the reaction L-lysyl-[protein] + 3 S-adenosyl-L-methionine = N(6),N(6),N(6)-trimethyl-L-lysyl-[protein] + 3 S-adenosyl-L-homocysteine + 3 H(+). Its function is as follows. Methylates ribosomal protein L11. The polypeptide is Ribosomal protein L11 methyltransferase (Pseudoalteromonas atlantica (strain T6c / ATCC BAA-1087)).